The primary structure comprises 146 residues: Decarboxylase dmxR15 (146 aa).

Residues 31 to 126 (PGMSEGDYRN…MHDHEVFADT (96 aa)) enclose the EthD domain.

Belongs to the tpcK family.

It carries out the reaction atrochrysone carboxylate + H(+) = atrochrysone + CO2. It functions in the pathway secondary metabolite biosynthesis. Functionally, decarboxylase; part of the gene cluster that mediates the biosynthesis of the dimeric xanthones cryptosporioptides. The pathway begins with the synthesis of atrochrysone thioester by the polyketide synthase dmx-nrPKS. The atrochrysone carboxyl ACP thioesterase dmxR1 then breaks the thioester bond and releases the atrochrysone carboxylic acid from dmx-nrPKS. Atrochrysone carboxylic acid is decarboxylated by the decarboxylase dmxR15, and oxidized by the anthrone oxygenase dmxR16 to yield emodin. Emodin is then reduced to emodin hydroquinone by the oxidoreductase dmxR7. A-ring reduction by the short chain dehydrogenase dmxR18, dehydration by the scytalone dehydratase-like protein dmxR17 and probable spontaneous re-oxidation, results in overall deoxygenation to chrysophanol. Baeyer-Villiger oxidation by the Baeyer-Villiger monooxygenase (BVMO) dmxR6 then yields monodictylactone in equilibrium with monodictyphenone. In the case of the cryptosporioptides biosynthesis, monodictylactone is reduced at C-12 to an alcohol (by the short chain dehydrogenases dmxR12 or dmxR8) and hydroxylated at C-5 by dmxR9, yielding the electron-rich aromatic which could eliminate H(2)O to form the ortho-quinonemethide, followed by tautomerisation to paraquinone and complete the formal reduction to produce the 10-methylgroup. Conjugate addition of C-4a-OH to the resulting paraquinone by the monooxygenase dmxR10 then gives cyclohexadienone, which is then reduced at C-5 by the short chain dehydrogenase dmxR3 to give the dihydroxanthone. The 6,7-epoxide in the cryptosporioptides could be introduced by the cytochrome P450 monooxygenase dmxL3. The highly reducing PKS dmxL2 manufactures butyrate, which is further carboxylated by dmxL1 to form ethylmalonate. It is not yet clear whether the carboxylation occurs while the butyrate is attached to the ACP of dmxL2, but this unusual fungal metabolite could then be esterified to O-5 by the O-acetyltransferase dmxR13. Finally, dimerization performed by dmxR5 gives the observed dimers cryptosporioptides A, B and C as the final products of the pathway. The protein is Decarboxylase dmxR15 of Cryptosporiopsis sp. (strain 8999).